The following is a 1388-amino-acid chain: MTMDADAMETETTDQVSASPLHFARSYQVEALEKAIKQNTIVFLETGSGKTLIAIMLLRSYAYLFRKPSPCFCVFLVPQVVLVTQQAEALKMHTDLKVGMYWGDMGVDFWDSSTWKQEVDKYEVLVMTPAILLDALRHSFLSLSMIKVLIVDECHHAGGKHPYACIMREFYHKELNSGTSNVPRIFGMTASLVKTKGENLDSYWKKIHELETLMNSKVYTCENESVLAGFVPFSTPSFKYYQHIKIPSPKRASLVEKLERLTIKHRLSLGTLDLNSSTVDSVEKRLLRISSTLTYCLDDLGILLAQKAAQSLSASQNDSFLWGELNMFSVALVKKFCSDASQEFLAEIPQGLNWSVANINGNAEAGLLTLKTVCLIETLLGYSSLENIRCIIFVDRVITAIVLESLLAEILPNCNNWKTKYVAGNNSGLQNQTRKKQNEIVEDFRRGLVNIIVATSILEEGLDVQSCNLVIRFDPASNICSFIQSRGRARMQNSDYLMMVESGDLLTQSRLMKYLSGGKRMREESLDHSLVPCPPLPDDSDEPLFRVESTGATVTLSSSVSLIYHYCSRLPSDEYFKPAPRFDVNKDQGSCTLYLPKSCPVKEVKAEANNKVLKQAVCLKACIQLHKVGALSDHLVPDMVVAETVSQKLEKIQYNTEQPCYFPPELVSQFSAQPETTYHFYLIRMKPNSPRNFHLNDVLLGTRVVLEDDIGNTSFRLEDHRGTIAVTLSYVGAFHLTQEEVLFCRRFQITLFRVLLDHSVENLMEALNGLHLRDGVALDYLLVPSTHSHETSLIDWEVIRSVNLTSHEVLEKHENCSTNGASRILHTKDGLFCTCVVQNALVYTPHNGYVYCTKGVLNNLNGNSLLTKRNSGDQTYIEYYEERHGIQLNFVDEPLLNGRHIFTLHSYLHMAKKKKEKEHDREFVELPPELCHVILSPISVDMIYSYTFIPSVMQRIESLLIAYNLKKSIPKVNIPTIKVLEAITTKKCEDQFHLESLETLGDSFLKYAVCQQLFQHCHTHHEGLLSTKKDGMISNVMLCQFGCQQKLQGFIRDECFEPKGWMVPGQSSAAYSLVNDTLPESRNIYVASRRNLKRKSVADVVESLIGAYLSEGGELAALMFMNWVGIKVDFTTTKIQRDSPIQAEKLVNVGYMESLLNYSFEDKSLLVEALTHGSYMMPEIPRCYQRLEFLGDSVLDYLITKHLYDKYPCLSPGLLTDMRSASVNNECYALVAVKANLHKHILYASHHLHKHISRTVSEFEQSSLQSTFGWESDISFPKVLGDVIESLAGAIFVDSGYNKEVVFASIKPLLGCMITPETVKLHPVRELTELCQKWQFELSKAKDFDSFTVEVKAKEMSFAHTAKASDKKMAKKLAYKEVLNLLKNSLDY.

One can recognise a Helicase ATP-binding domain in the interval 31–210 (ALEKAIKQNT…DSYWKKIHEL (180 aa)). 44 to 51 (LETGSGKT) contributes to the ATP binding site. A DECH box motif is present at residues 152–155 (DECH). In terms of domain architecture, Helicase C-terminal spans 380–544 (LGYSSLENIR…PLPDDSDEPL (165 aa)). The region spanning 559–645 (SVSLIYHYCS…VPDMVVAETV (87 aa)) is the Dicer dsRNA-binding fold domain. A PAZ domain is found at 805–935 (TSHEVLEKHE…LPPELCHVIL (131 aa)). RNase III domains are found at residues 962 to 1113 (AYNL…SEGG) and 1149 to 1296 (VGYM…VDSG). Residues Glu1188, Asp1282, and Glu1285 each contribute to the Mg(2+) site. One can recognise a DRBM domain in the interval 1315–1384 (TPETVKLHPV…YKEVLNLLKN (70 aa)).

It belongs to the helicase family. Dicer subfamily. Mg(2+) serves as cofactor. The cofactor is Mn(2+).

Its subcellular location is the nucleus. The protein localises to the cytoplasm. Ribonuclease (RNase) III involved in RNA-mediated post-transcriptional gene silencing (PTGS). Involved in the processing of natural small interfering RNAs (nat-siRNAs, derived from cis-natural antisense transcripts) by cleaving small dsRNAs into 24 nucleotide nat-siRNAs. Plays an essential role in transitive silencing of transgenes by processing secondary siRNAs. This pathway, which requires DCL4 and RDR6, amplifies silencing by using the target RNA as substrate to generate secondary siRNAs, providing an efficient mechanism for long-distance silencing. May participate with DCL3 in the production of 24 nucleotide repeat-associated siRNAs (ra-siRNAs) which derive from heterochromatin and DNA repeats such as transposons. Plays a role in antiviral RNA silencing. Involved in the production of viral siRNAs derived from the turnip crinkle virus (TCV) and tobacco rattle virus (TRV). Targeted by the viral silencing suppressor (VSR) protein 2b of the cucumber mosaic virus (CMV) that inactivates DCL2 function in RNA silencing. Does not seem to be involved in microRNAs (miRNAs) processing. In Arabidopsis thaliana (Mouse-ear cress), this protein is Endoribonuclease Dicer homolog 2.